The primary structure comprises 734 residues: Homoaconitase, mitochondrial (734 aa).

The N-terminal 25 residues, 1–25 (MGASNLLRFGAVTRISTPLLSRRSL), are a transit peptide targeting the mitochondrion. The [4Fe-4S] cluster site is built by Cys367, Cys427, and Cys430.

It belongs to the aconitase/IPM isomerase family. It depends on [4Fe-4S] cluster as a cofactor.

The protein localises to the mitochondrion. The enzyme catalyses (2R,3S)-homoisocitrate = cis-homoaconitate + H2O. Its pathway is amino-acid biosynthesis; L-lysine biosynthesis via AAA pathway; L-alpha-aminoadipate from 2-oxoglutarate: step 3/5. In terms of biological role, catalyzes the reversible hydration of cis-homoaconitate to (2R,3S)-homoisocitrate, a step in the alpha-aminoadipate pathway for lysine biosynthesis. In Mycosarcoma maydis (Corn smut fungus), this protein is Homoaconitase, mitochondrial (LYS4).